We begin with the raw amino-acid sequence, 357 residues long: Putative DNA directed RNA polymerase subunit R470 (357 aa).

It belongs to the archaeal Rpo11/eukaryotic RPB11/RPC19 RNA polymerase subunit family.

The protein resides in the virion. It carries out the reaction RNA(n) + a ribonucleoside 5'-triphosphate = RNA(n+1) + diphosphate. The sequence is that of Putative DNA directed RNA polymerase subunit R470 from Acanthamoeba polyphaga mimivirus (APMV).